A 305-amino-acid polypeptide reads, in one-letter code: Dihydroorotate dehydrogenase B (NAD(+)), catalytic subunit (305 aa).

Residues S23 and 47–48 (KG) contribute to the FMN site. Substrate is bound by residues K47 and 71-75 (NAIGL). 2 residues coordinate FMN: N101 and N129. A substrate-binding site is contributed by N129. Catalysis depends on C132, which acts as the Nucleophile. Positions 167 and 193 each coordinate FMN. 194–195 (NT) provides a ligand contact to substrate. Residues G219, 245–246 (GG), and 267–268 (GT) each bind FMN.

The protein belongs to the dihydroorotate dehydrogenase family. Type 1 subfamily. Heterotetramer of 2 PyrK and 2 PyrD type B subunits. FMN is required as a cofactor.

The protein resides in the cytoplasm. The enzyme catalyses (S)-dihydroorotate + NAD(+) = orotate + NADH + H(+). It functions in the pathway pyrimidine metabolism; UMP biosynthesis via de novo pathway; orotate from (S)-dihydroorotate (NAD(+) route): step 1/1. Functionally, catalyzes the conversion of dihydroorotate to orotate with NAD(+) as electron acceptor. The polypeptide is Dihydroorotate dehydrogenase B (NAD(+)), catalytic subunit (pyrD) (Geotalea uraniireducens (strain Rf4) (Geobacter uraniireducens)).